Consider the following 1292-residue polypeptide: Calcium-transporting ATPase 2 (1292 aa).

Positions 1–105 (MPTYNDDDDS…EQASSKSSTS (105 aa)) are disordered. At 1 to 236 (MPTYNDDDDS…RLMLEAFKDK (236 aa)) the chain is on the cytoplasmic side. Positions 23–41 (KPSSSQFLGVPSSNYNQRE) are enriched in polar residues. Low complexity predominate over residues 44 to 60 (SRSGSSTISREPSSSGT). The span at 68–78 (DSMKESYDKNK) shows a compositional bias: basic and acidic residues. Residues 237–257 (VLILLSIAAVVSLALGLYQTF) traverse the membrane as a helical segment. Residues 258–273 (GQPPTLDPITGKPEPR) lie on the Vacuolar side of the membrane. A helical transmembrane segment spans residues 274–294 (VEWVEGVAIMAAIVIVVTVGG). The Cytoplasmic segment spans residues 295–448 (VNDWQKELQF…QLRLSRVADA (154 aa)). The helical transmembrane segment at 449–469 (IAKLGGAASALLFIVLLIEFL) threads the bilayer. Topologically, residues 470-488 (VRLKSNDSSSKNKGQEFLQ) are vacuolar. The helical transmembrane segment at 489 to 509 (ILIVSVTLLVVAVPEGLPLAV) threads the bilayer. Ca(2+) is bound by residues Val498 and Glu503. Residues 510 to 938 (TLALAFATNR…GRTVNDAVKK (429 aa)) lie on the Cytoplasmic side of the membrane. Asp545 functions as the 4-aspartylphosphate intermediate in the catalytic mechanism. The Mg(2+) site is built by Asp545 and Thr547. ATP contacts are provided by residues Thr547, Glu638, Lys691, Arg736, 807 to 809 (TGD), Arg856, and Lys862. Asp881 is a Mg(2+) binding site. Asn884 lines the ATP pocket. The chain crosses the membrane as a helical span at residues 939–959 (FLQFQITVNITAVFLTIISAV). Residue Asn947 participates in Ca(2+) binding. Residues 960–966 (ASTDQSS) lie on the Vacuolar side of the membrane. Residues 967-987 (VLTAVQLLWVNLIMDTLAALA) traverse the membrane as a helical segment. Ca(2+) contacts are provided by Asn977 and Asp981. The Cytoplasmic segment spans residues 988-1016 (LATDPPTPEVLKRKPEKPGASLFTFDMWK). A helical transmembrane segment spans residues 1017–1037 (MIICQSMYQLAVTLVLHFAGN). At 1038-1084 (SIFHYPSNTADMNTIVFNTFVWLQLFNEINNRRLDNKLNIFERINHN) the chain is on the vacuolar side. The chain crosses the membrane as a helical span at residues 1085-1105 (FLFIAIFVIVAGIQVIIVFFG). Residues 1106–1115 (GAAFSVKRID) are Cytoplasmic-facing. The helical transmembrane segment at 1116 to 1136 (GKGWAISIVFGVISIPLGALI) threads the bilayer. At 1137–1292 (RCVPNNFLRK…ALDKKSSNVH (156 aa)) the chain is on the vacuolar side.

Belongs to the cation transport ATPase (P-type) (TC 3.A.3) family.

The protein resides in the vacuole membrane. The enzyme catalyses Ca(2+)(in) + ATP + H2O = Ca(2+)(out) + ADP + phosphate + H(+). Its function is as follows. This magnesium-dependent enzyme catalyzes the hydrolysis of ATP coupled with the transport of calcium. Transports the calcium to the vacuole and participates in the control of the cytosolic free calcium. This chain is Calcium-transporting ATPase 2 (pmc1), found in Schizosaccharomyces pombe (strain 972 / ATCC 24843) (Fission yeast).